A 189-amino-acid polypeptide reads, in one-letter code: Peptidyl-tRNA hydrolase (189 aa).

Residue tyrosine 15 coordinates tRNA. Histidine 20 (proton acceptor) is an active-site residue. TRNA-binding residues include phenylalanine 66, asparagine 68, and asparagine 114.

The protein belongs to the PTH family. In terms of assembly, monomer.

It localises to the cytoplasm. It carries out the reaction an N-acyl-L-alpha-aminoacyl-tRNA + H2O = an N-acyl-L-amino acid + a tRNA + H(+). Hydrolyzes ribosome-free peptidyl-tRNAs (with 1 or more amino acids incorporated), which drop off the ribosome during protein synthesis, or as a result of ribosome stalling. Its function is as follows. Catalyzes the release of premature peptidyl moieties from peptidyl-tRNA molecules trapped in stalled 50S ribosomal subunits, and thus maintains levels of free tRNAs and 50S ribosomes. This is Peptidyl-tRNA hydrolase from Streptococcus sanguinis (strain SK36).